The following is a 441-amino-acid chain: Xylose isomerase (441 aa).

Active-site residues include H105 and D108. Mg(2+) contacts are provided by E236, E272, H275, D300, D311, D313, and D343.

Belongs to the xylose isomerase family. As to quaternary structure, homotetramer. Mg(2+) is required as a cofactor.

It localises to the cytoplasm. The catalysed reaction is alpha-D-xylose = alpha-D-xylulofuranose. In Mesorhizobium japonicum (strain LMG 29417 / CECT 9101 / MAFF 303099) (Mesorhizobium loti (strain MAFF 303099)), this protein is Xylose isomerase.